The following is a 571-amino-acid chain: RNA polymerase sigma factor SigA (571 aa).

The tract at residues 321–391 (MVESNLRLVI…TRAIADQART (71 aa)) is sigma-70 factor domain-2. The Interaction with polymerase core subunit RpoC signature appears at 345-348 (DLIQ). The tract at residues 400–476 (ETINKVLRGA…DTAVESPAEA (77 aa)) is sigma-70 factor domain-3. Residues 489–542 (VLKTLTDRERFVLIHRFGLLDGRPKTLEEVGSAFNVTRERIRQIEAKALRKMRH) form a sigma-70 factor domain-4 region. The H-T-H motif DNA-binding region spans 515-534 (LEEVGSAFNVTRERIRQIEA).

It belongs to the sigma-70 factor family. RpoD/SigA subfamily. As to quaternary structure, interacts transiently with the RNA polymerase catalytic core.

Its subcellular location is the cytoplasm. Its function is as follows. Sigma factors are initiation factors that promote the attachment of RNA polymerase to specific initiation sites and are then released. This sigma factor is the primary sigma factor during exponential growth. The protein is RNA polymerase sigma factor SigA of Chlamydia trachomatis serovar D (strain ATCC VR-885 / DSM 19411 / UW-3/Cx).